We begin with the raw amino-acid sequence, 75 residues long: Small ribosomal subunit protein bS16 (75 aa).

This sequence belongs to the bacterial ribosomal protein bS16 family.

The protein is Small ribosomal subunit protein bS16 of Nitratiruptor sp. (strain SB155-2).